The following is a 134-amino-acid chain: Putative cytochrome c oxidase subunit 6b-like (134 aa).

A disordered region spans residues 1–61 (MSSAQMDPHD…DSGRETDAAV (61 aa)). Composition is skewed to basic and acidic residues over residues 7 to 19 (DPHD…DISK) and 44 to 61 (ATFR…DAAV). The CHCH domain occupies 71-114 (TRHCFNRFMQYHKCIEKNGRDANDCNNLRDYVRSICPEELVSKI). The Cx9C motif signature appears at 74 to 84 (CFNRFMQYHKC). Intrachain disulfides connect Cys-74–Cys-106 and Cys-84–Cys-95. The Cx10C motif signature appears at 95-106 (CNNLRDYVRSIC).

The protein belongs to the cytochrome c oxidase subunit 6B (TC 3.D.4.8) family.

The protein localises to the mitochondrion. In terms of biological role, this protein is one of the nuclear-coded polypeptide chains of cytochrome c oxidase, the terminal oxidase in mitochondrial electron transport. This protein may be one of the heme-binding subunits of the oxidase. This chain is Putative cytochrome c oxidase subunit 6b-like, found in Arabidopsis thaliana (Mouse-ear cress).